A 265-amino-acid chain; its full sequence is 4-hydroxy-tetrahydrodipicolinate reductase (265 aa).

9–14 serves as a coordination point for NAD(+); the sequence is GPRGRM. Residue lysine 37 participates in NADP(+) binding. Residues 99-101 and 125-128 each bind NAD(+); these read GTT and APNF. The active-site Proton donor/acceptor is the histidine 155. Histidine 156 serves as a coordination point for (S)-2,3,4,5-tetrahydrodipicolinate. Lysine 159 serves as the catalytic Proton donor. 165–166 is a (S)-2,3,4,5-tetrahydrodipicolinate binding site; the sequence is GT. The segment covering 178–190 has biased composition (basic and acidic residues); it reads RESQKQGHPKEEE. The interval 178-200 is disordered; that stretch reads RESQKQGHPKEEETLPGARGADM.

This sequence belongs to the DapB family.

It localises to the cytoplasm. It catalyses the reaction (S)-2,3,4,5-tetrahydrodipicolinate + NAD(+) + H2O = (2S,4S)-4-hydroxy-2,3,4,5-tetrahydrodipicolinate + NADH + H(+). It carries out the reaction (S)-2,3,4,5-tetrahydrodipicolinate + NADP(+) + H2O = (2S,4S)-4-hydroxy-2,3,4,5-tetrahydrodipicolinate + NADPH + H(+). Its pathway is amino-acid biosynthesis; L-lysine biosynthesis via DAP pathway; (S)-tetrahydrodipicolinate from L-aspartate: step 4/4. Its function is as follows. Catalyzes the conversion of 4-hydroxy-tetrahydrodipicolinate (HTPA) to tetrahydrodipicolinate. The sequence is that of 4-hydroxy-tetrahydrodipicolinate reductase from Oceanobacillus iheyensis (strain DSM 14371 / CIP 107618 / JCM 11309 / KCTC 3954 / HTE831).